Reading from the N-terminus, the 187-residue chain is MINVNTFKPGITFEDDGDIFVVLEAQHSKQGRGQANVKAKVKNLRTGSTVIKSYTGGVMVSRAHIDKRPMSYLYSDGENIILMDTETYEQVEIPVSHVEWELNFLKEGMIVKIRKYKEEILDIELDANVVLEVTEAPDAVKGNTANNPQKKVKLETGFELETPMFISEGEKIIVSTETGKYVGRANK.

It belongs to the elongation factor P family.

Its subcellular location is the cytoplasm. Its pathway is protein biosynthesis; polypeptide chain elongation. In terms of biological role, involved in peptide bond synthesis. Stimulates efficient translation and peptide-bond synthesis on native or reconstituted 70S ribosomes in vitro. Probably functions indirectly by altering the affinity of the ribosome for aminoacyl-tRNA, thus increasing their reactivity as acceptors for peptidyl transferase. In Mycoplasmopsis agalactiae (strain NCTC 10123 / CIP 59.7 / PG2) (Mycoplasma agalactiae), this protein is Elongation factor P.